A 247-amino-acid chain; its full sequence is ATP synthase subunit a, chloroplastic (247 aa).

5 consecutive transmembrane segments (helical) span residues 38–58 (QVLI…TLAV), 95–115 (VPFI…GALL), 134–154 (INTT…AGLT), 199–219 (LVVV…VMFL), and 220–240 (GLFT…AYIG).

It belongs to the ATPase A chain family. In terms of assembly, F-type ATPases have 2 components, CF(1) - the catalytic core - and CF(0) - the membrane proton channel. CF(1) has five subunits: alpha(3), beta(3), gamma(1), delta(1), epsilon(1). CF(0) has four main subunits: a, b, b' and c.

It localises to the plastid. The protein localises to the chloroplast thylakoid membrane. In terms of biological role, key component of the proton channel; it plays a direct role in the translocation of protons across the membrane. The sequence is that of ATP synthase subunit a, chloroplastic from Jasminum nudiflorum (Winter jasmine).